Reading from the N-terminus, the 400-residue chain is Homoserine O-acetyltransferase (400 aa).

An AB hydrolase-1 domain is found at 64–373 (NAILICHALT…TDRGHDAFLL (310 aa)). The Nucleophile role is filled by S169. R239 lines the substrate pocket. Active-site residues include D335 and H368. D369 is a substrate binding site.

The protein belongs to the AB hydrolase superfamily. MetX family. Homodimer.

The protein localises to the cytoplasm. The enzyme catalyses L-homoserine + acetyl-CoA = O-acetyl-L-homoserine + CoA. The protein operates within amino-acid biosynthesis; L-methionine biosynthesis via de novo pathway; O-acetyl-L-homoserine from L-homoserine: step 1/1. Functionally, transfers an acetyl group from acetyl-CoA to L-homoserine, forming acetyl-L-homoserine. This is Homoserine O-acetyltransferase from Bradyrhizobium diazoefficiens (strain JCM 10833 / BCRC 13528 / IAM 13628 / NBRC 14792 / USDA 110).